The following is a 158-amino-acid chain: Transcriptional regulator MraZ (158 aa).

2 SpoVT-AbrB domains span residues 5–52 and 91–134; these read IYET…TFSS and AVEC…SQAE.

The protein belongs to the MraZ family. As to quaternary structure, forms oligomers.

It is found in the cytoplasm. It localises to the nucleoid. In Geobacter sulfurreducens (strain ATCC 51573 / DSM 12127 / PCA), this protein is Transcriptional regulator MraZ.